Consider the following 184-residue polypeptide: Large ribosomal subunit protein uL6 (184 aa).

It belongs to the universal ribosomal protein uL6 family. Part of the 50S ribosomal subunit.

This protein binds to the 23S rRNA, and is important in its secondary structure. It is located near the subunit interface in the base of the L7/L12 stalk, and near the tRNA binding site of the peptidyltransferase center. The polypeptide is Large ribosomal subunit protein uL6 (Pyrococcus abyssi (strain GE5 / Orsay)).